Reading from the N-terminus, the 379-residue chain is Chaperone protein DnaJ (379 aa).

Residues 7–72 (DYYEVLGVDK…KKRSMYDQFG (66 aa)) enclose the J domain. The CR-type zinc finger occupies 147–225 (GKKAELSYTR…CGGNGLERKK (79 aa)). Zn(2+)-binding residues include Cys-160, Cys-163, Cys-177, Cys-180, Cys-199, Cys-202, Cys-213, and Cys-216. 4 CXXCXGXG motif repeats span residues 160–167 (CSECHGTG), 177–184 (CPDCKGTG), 199–206 (CPTCGGEG), and 213–220 (CKKCGGNG).

This sequence belongs to the DnaJ family. As to quaternary structure, homodimer. Zn(2+) serves as cofactor.

Its subcellular location is the cytoplasm. Participates actively in the response to hyperosmotic and heat shock by preventing the aggregation of stress-denatured proteins and by disaggregating proteins, also in an autonomous, DnaK-independent fashion. Unfolded proteins bind initially to DnaJ; upon interaction with the DnaJ-bound protein, DnaK hydrolyzes its bound ATP, resulting in the formation of a stable complex. GrpE releases ADP from DnaK; ATP binding to DnaK triggers the release of the substrate protein, thus completing the reaction cycle. Several rounds of ATP-dependent interactions between DnaJ, DnaK and GrpE are required for fully efficient folding. Also involved, together with DnaK and GrpE, in the DNA replication of plasmids through activation of initiation proteins. The polypeptide is Chaperone protein DnaJ (Treponema denticola (strain ATCC 35405 / DSM 14222 / CIP 103919 / JCM 8153 / KCTC 15104)).